Consider the following 389-residue polypeptide: MALGTTMTEAGEAALGRLRQWPGEHRVAVGLSGGVDSSLTAALLVEAGWEVEGLTLWLMSGKGACCAEGLVDAAGICEQLGIPHHVVDTRETFQKEIVQRLVDGYQDGITPLPCSQCNRSVKFGPMLEWAAQERNLPRIATGHYARIRHGGDCGRHQLLRGLDSRKDQSYFLYDLPQEALGRIVFPLGELTKADTRIEAGRHGLRTAEKPESQDLCLADHHGSMRAFLDTYLPPRQGEIVLKDGTVVGEHDGIEHFTIGQRKGLGVAWQEPLHVVKLDPAMNRVVVAPRAEAGRHEAVVGAINWVSIDPPLQAMNLEVQVRYRSAPVTARLTPLPATDDDHQRQRPHRCHLVFDEDQFSIAPGQAAVFYSDDTVLGGGLLQRDFDTNQE.

ATP-binding positions include Gly30–Ser37 and Leu56. Catalysis depends on Cys117, which acts as the Nucleophile. Cys117 and Cys216 are oxidised to a cystine. Gly142 provides a ligand contact to ATP. Residues Lys166–Gln168 are interaction with tRNA. The active-site Cysteine persulfide intermediate is the Cys216. The interaction with tRNA stretch occupies residues Arg321–Tyr322.

Belongs to the MnmA/TRMU family.

It localises to the cytoplasm. The catalysed reaction is S-sulfanyl-L-cysteinyl-[protein] + uridine(34) in tRNA + AH2 + ATP = 2-thiouridine(34) in tRNA + L-cysteinyl-[protein] + A + AMP + diphosphate + H(+). Catalyzes the 2-thiolation of uridine at the wobble position (U34) of tRNA, leading to the formation of s(2)U34. This chain is tRNA-specific 2-thiouridylase MnmA, found in Synechococcus sp. (strain CC9902).